Consider the following 93-residue polypeptide: Small ribosomal subunit protein uS19 (93 aa).

This sequence belongs to the universal ribosomal protein uS19 family.

Functionally, protein S19 forms a complex with S13 that binds strongly to the 16S ribosomal RNA. This Citrifermentans bemidjiense (strain ATCC BAA-1014 / DSM 16622 / JCM 12645 / Bem) (Geobacter bemidjiensis) protein is Small ribosomal subunit protein uS19.